The primary structure comprises 316 residues: ATP synthase gamma chain (316 aa).

The protein belongs to the ATPase gamma chain family. F-type ATPases have 2 components, CF(1) - the catalytic core - and CF(0) - the membrane proton channel. CF(1) has five subunits: alpha(3), beta(3), gamma(1), delta(1), epsilon(1). CF(0) has three main subunits: a, b and c.

It is found in the cellular thylakoid membrane. Produces ATP from ADP in the presence of a proton gradient across the membrane. The gamma chain is believed to be important in regulating ATPase activity and the flow of protons through the CF(0) complex. This Synechococcus sp. (strain CC9605) protein is ATP synthase gamma chain.